The sequence spans 1128 residues: Glutamate receptor-interacting protein 1 (1128 aa).

Serine 43 bears the Phosphoserine mark. 6 PDZ domains span residues 53–136 (VVEL…EYEL), 150–238 (TVEV…EYDV), 252–336 (LVEV…LPHH), 472–561 (EVVL…EFDV), 573–658 (HVKL…RKDE), and 673–755 (TVEL…KKQT). Disordered regions lie at residues 754 to 798 (QTDA…YPST) and 935 to 981 (MSLN…GRKS). Residues 944–974 (PRSQLGRQASFQERSSSRPHYSQTTRSNTLP) are compositionally biased toward polar residues. The PDZ 7 domain occupies 1004–1086 (KVTLYKDSDM…KLDLVISRNP (83 aa)). Residues 1093-1115 (IDQQSLPGDWSEQNSAFFQQPSH) are compositionally biased toward polar residues. The segment at 1093–1128 (IDQQSLPGDWSEQNSAFFQQPSHGGNLETREPTNTL) is disordered.

Interacts with EPHA7, EPHB2, KIF5A, KIF5B, KIF5C, GRIA2, GRIA3, GRIPAP1/GRASP1, PPFIA1, PPFIA4, FRAS1, PLCD4, PTPRF and liprins-alpha. Can form homomultimers or heteromultimers with GRIP2. Forms a ternary complex with GRIA2 and CSPG4. Interacts with ATAD1 in an ATP-dependent manner. ATAD1-catalyzed ATP hydrolysis disrupts binding to ATAD1 and to GRIA2 and leads to AMPAR complex disassembly. Interacts with EFNB1, EFNB3 and the C-terminal tail of PRLHR. Interacts with SLC30A9. Interacts with BUD23. Forms a complex with NSG1, GRIA2 and STX12; controls the intracellular fate of AMPAR and the endosomal sorting of the GRIA2 subunit toward recycling and membrane targeting. Interacts with NSG1.

It is found in the cytoplasmic vesicle. The protein resides in the perikaryon. It localises to the cell projection. The protein localises to the dendrite. Its subcellular location is the cytoplasm. It is found in the endomembrane system. The protein resides in the postsynaptic cell membrane. It localises to the postsynaptic density. The protein localises to the endoplasmic reticulum membrane. Functionally, may play a role as a localized scaffold for the assembly of a multiprotein signaling complex and as mediator of the trafficking of its binding partners at specific subcellular location in neurons. Through complex formation with NSG1, GRIA2 and STX12 controls the intracellular fate of AMPAR and the endosomal sorting of the GRIA2 subunit toward recycling and membrane targeting. In Homo sapiens (Human), this protein is Glutamate receptor-interacting protein 1 (GRIP1).